The primary structure comprises 193 residues: Ion-translocating oxidoreductase complex subunit A (193 aa).

Helical transmembrane passes span 5–25, 39–59, 65–85, 102–122, 134–154, and 171–191; these read ILLI…FLGL, IGMG…AYLV, IPLE…AVIV, LLGI…VALL, VLYG…FSAL, and SIAL…TGLV.

This sequence belongs to the NqrDE/RnfAE family. In terms of assembly, the complex is composed of six subunits: RnfA, RnfB, RnfC, RnfD, RnfE and RnfG.

Its subcellular location is the cell inner membrane. In terms of biological role, part of a membrane-bound complex that couples electron transfer with translocation of ions across the membrane. The protein is Ion-translocating oxidoreductase complex subunit A of Glaesserella parasuis serovar 5 (strain SH0165) (Haemophilus parasuis).